The chain runs to 440 residues: Tetratricopeptide repeat protein 5 (440 aa).

TPR repeat units lie at residues 7 to 61 (EEAK…EEVL), 68 to 98 (AQAL…AVKL), 103 to 130 (VEAW…SGAL), 136 to 174 (KVSL…AVQM), and 179 to 216 (GRSW…AEKV). The Nuclear export signal motif lies at 13–24 (LQKLQGLVDRLY). Residue S203 is modified to Phosphoserine; by ATM. Phosphoserine; by CHEK2 is present on S221. A TPR 6 repeat occupies 224 to 253 (PDLHLNRATLHKYEESYGEALEGFSQAAAL). The mediates interaction with 28S rRNA of ribosome-coding tubulin stretch occupies residues 285–287 (KPK).

As to quaternary structure, interacts with JMY and p300/EP300; the interaction occurs in the nucleus and augments the association between JMY and p300/EP300 in response to DNA damage. Interacts with PRMT5; the interaction is DNA damage-dependent and promotes PRMT5 interaction with p53/TP53 and subsequent methylation. Forms a complex with HSF1 and p300/EP300; these interactions augment chromatin-bound HSF1 and p300/EP300 histone acetyltransferase activity, resulting in enhanced heat-shock-responsive transcription. Interacts with JMY; the interaction occurs in the cytoplasm and results in the inhibition of JYM's nucleation activity. Interacts with ribosome-coding tubulin (via 60S subunit 28S rRNA and protein uL24/RPL26) and the N-terminal of nascent tubulin polypeptide (via alpha-tubulin MREC motif and beta-tubulin MREI motif); these interactions result in tubulin mRNA-targeted degradation. Interacts with ATP5F1B; the interaction occurs in the mitochondria and results in ATP production decrease. Interacts with p53/TP53; the interaction occurs in the mitochondria and results in increased apoptosis. Phosphorylation by ATM kinase induces nuclear accumulation while interfering with nuclear export, and phosphorylation by CHEK2 kinase enhances nuclear stability. Expressed in heart, brain, spleen, lung, liver, skeletal muscle, kidney and testis.

Its subcellular location is the nucleus. The protein localises to the cytoplasm. It localises to the cytoplasmic vesicle. It is found in the mitochondrion matrix. Functionally, cofactor involved in the regulation of various cellular mechanisms such as actin regulation, autophagy, chromatin regulation and DNA repair. In physiological conditions, interacts with cofactor JMY in the cytoplasm which prevents JMY's actin nucleation activity and ability to activate the Arp2/3 complex. Acts as a negative regulator of nutrient stress-induced autophagy by inhibiting JMY's interaction with MAP1LC3B, thereby preventing autophagosome formation. Involves in tubulin autoregulation by promoting its degradation in response to excess soluble tubulin. To do so, associates with the active ribosome near the ribosome exit tunnel and with nascent tubulin polypeptides early during their translation, triggering tubulin mRNA-targeted degradation. Following DNA damage, phosphorylated by DNA damage responsive protein kinases ATM and CHEK2, leading to its nuclear accumulation and stability. Nuclear TTC5/STRAP promotes the assembly of a stress-responsive p53/TP53 coactivator complex, which includes the coactivators JMY and p300, thereby increasing p53/TP53-dependent transcription and apoptosis. Also recruits arginine methyltransferase PRMT5 to p53/TP53 when DNA is damaged, allowing PRMT5 to methylate p53/TP53. In DNA stress conditions, also prevents p53/TP53 degradation by E3 ubiquitin ligase MDM2. Upon heat-shock stress, forms a chromatin-associated complex with heat-shock factor 1 HSF1 and p300/EP300 to stimulate heat-shock-responsive transcription, thereby increasing cell survival. Mitochondrial TTC5/STRAP interacts with ATP synthase subunit beta ATP5F1B which decreased ATP synthase activity and lowers mitochondrial ATP production, thereby regulating cellular respiration and mitochondrial-dependent apoptosis. Mitochondrial TTC5/STRAP also regulates p53/TP53-mediated apoptosis. This chain is Tetratricopeptide repeat protein 5, found in Mus musculus (Mouse).